Consider the following 457-residue polypeptide: Multidrug resistance protein MdtK (457 aa).

The next 12 helical transmembrane spans lie at 11-31 (LLAL…MGFV), 53-73 (IWLP…PVIA), 93-113 (WLAG…GYII), 127-147 (AVGY…FQVA), 160-180 (GMVM…IFIY), 188-208 (LGGI…FIAM), 243-263 (LPIA…ALLV), 276-296 (IALN…AAVT), 314-334 (AART…IFTV), 350-370 (VVAL…SDSI), 387-407 (IFFI…YILA), and 418-438 (PAGF…LMML).

It belongs to the multi antimicrobial extrusion (MATE) (TC 2.A.66.1) family. MdtK subfamily.

The protein resides in the cell inner membrane. Its function is as follows. Multidrug efflux pump that functions probably as a Na(+)/drug antiporter. This Salmonella agona (strain SL483) protein is Multidrug resistance protein MdtK.